Consider the following 512-residue polypeptide: 2,3-bisphosphoglycerate-independent phosphoglycerate mutase (512 aa).

2 residues coordinate Mn(2+): Asp-11 and Ser-61. The active-site Phosphoserine intermediate is Ser-61. Substrate contacts are provided by residues His-122, 152–153 (RD), Arg-184, Arg-190, 259–262 (RADR), and Lys-332. Residues Asp-399, His-403, Asp-440, His-441, and His-459 each coordinate Mn(2+).

Belongs to the BPG-independent phosphoglycerate mutase family. Monomer. Mn(2+) is required as a cofactor.

The catalysed reaction is (2R)-2-phosphoglycerate = (2R)-3-phosphoglycerate. The protein operates within carbohydrate degradation; glycolysis; pyruvate from D-glyceraldehyde 3-phosphate: step 3/5. Catalyzes the interconversion of 2-phosphoglycerate and 3-phosphoglycerate. In Francisella tularensis subsp. tularensis (strain FSC 198), this protein is 2,3-bisphosphoglycerate-independent phosphoglycerate mutase.